A 245-amino-acid polypeptide reads, in one-letter code: MIKLVLIRHGQSLWNLENRFTGWTDVDLSENGLHEARTAGAILKKNGYTFDVAYTSVLKRAIRTLWIILHEMDLAWVPVHKSWKLNERHYGALQGLNKDETAKKYGEEQVHIWRRSTNVRPPALAEDDPRYEVTDPRYKRLKKGEFPLTECLEDTEKRVLEFWHKEIAPMLCSNQKVIISSHGNTIRSLVKYLDHLSDDGVVSLNIPTGIPLVYELDEHLHPIRHYYLNMDGEVQEGVIPKHISF.

Substrate-binding positions include 8–15, 21–22, R60, 87–90, K98, 114–115, and 183–184; these read RHGQSLWN, TG, ERHY, RR, and GN. H9 functions as the Tele-phosphohistidine intermediate in the catalytic mechanism. E87 functions as the Proton donor/acceptor in the catalytic mechanism.

Belongs to the phosphoglycerate mutase family. BPG-dependent PGAM subfamily.

The catalysed reaction is (2R)-2-phosphoglycerate = (2R)-3-phosphoglycerate. It functions in the pathway carbohydrate degradation; glycolysis; pyruvate from D-glyceraldehyde 3-phosphate: step 3/5. Its function is as follows. Catalyzes the interconversion of 2-phosphoglycerate and 3-phosphoglycerate. The sequence is that of 2,3-bisphosphoglycerate-dependent phosphoglycerate mutase from Bacillus cytotoxicus (strain DSM 22905 / CIP 110041 / 391-98 / NVH 391-98).